A 231-amino-acid chain; its full sequence is Superoxide dismutase [Mn] 1, mitochondrial (231 aa).

A mitochondrion-targeting transit peptide spans 1 to 29; that stretch reads MAIRCVASRKTLAGLKETSSRLLRIRGIQ. Residues H55 and H103 each contribute to the Mn(2+) site. S124 carries the phosphoserine modification. D192 and H196 together coordinate Mn(2+).

It belongs to the iron/manganese superoxide dismutase family. In terms of assembly, homotetramer. Requires Mn(2+) as cofactor.

It is found in the mitochondrion matrix. The catalysed reaction is 2 superoxide + 2 H(+) = H2O2 + O2. With respect to regulation, activated by MTM1. In terms of biological role, destroys superoxide anion radicals which are normally produced within the cells and which are toxic to biological systems. This Arabidopsis thaliana (Mouse-ear cress) protein is Superoxide dismutase [Mn] 1, mitochondrial (MSD1).